A 378-amino-acid polypeptide reads, in one-letter code: Protein RecA (378 aa).

Residue 79–86 coordinates ATP; sequence GPESSGKT.

This sequence belongs to the RecA family.

The protein resides in the cytoplasm. Can catalyze the hydrolysis of ATP in the presence of single-stranded DNA, the ATP-dependent uptake of single-stranded DNA by duplex DNA, and the ATP-dependent hybridization of homologous single-stranded DNAs. It interacts with LexA causing its activation and leading to its autocatalytic cleavage. This Streptococcus pyogenes serotype M12 (strain MGAS2096) protein is Protein RecA.